Consider the following 206-residue polypeptide: Large ribosomal subunit protein uL4 (206 aa).

Residues alanine 55–serine 80 are disordered.

This sequence belongs to the universal ribosomal protein uL4 family. Part of the 50S ribosomal subunit.

Functionally, one of the primary rRNA binding proteins, this protein initially binds near the 5'-end of the 23S rRNA. It is important during the early stages of 50S assembly. It makes multiple contacts with different domains of the 23S rRNA in the assembled 50S subunit and ribosome. Its function is as follows. Forms part of the polypeptide exit tunnel. In Nitratidesulfovibrio vulgaris (strain DSM 19637 / Miyazaki F) (Desulfovibrio vulgaris), this protein is Large ribosomal subunit protein uL4.